We begin with the raw amino-acid sequence, 476 residues long: Bifunctional protein HldE (476 aa).

A ribokinase region spans residues 1–318 (MKPILPDYNN…AEAIHGSRDT (318 aa)). Position 195-198 (195-198 (NMSE)) interacts with ATP. The active site involves D264. Positions 344-476 (MTNGCFDILH…IIDAIKGGRG (133 aa)) are cytidylyltransferase.

The protein in the N-terminal section; belongs to the carbohydrate kinase PfkB family. In the C-terminal section; belongs to the cytidylyltransferase family. In terms of assembly, homodimer.

The enzyme catalyses D-glycero-beta-D-manno-heptose 7-phosphate + ATP = D-glycero-beta-D-manno-heptose 1,7-bisphosphate + ADP + H(+). It carries out the reaction D-glycero-beta-D-manno-heptose 1-phosphate + ATP + H(+) = ADP-D-glycero-beta-D-manno-heptose + diphosphate. The protein operates within nucleotide-sugar biosynthesis; ADP-L-glycero-beta-D-manno-heptose biosynthesis; ADP-L-glycero-beta-D-manno-heptose from D-glycero-beta-D-manno-heptose 7-phosphate: step 1/4. It participates in nucleotide-sugar biosynthesis; ADP-L-glycero-beta-D-manno-heptose biosynthesis; ADP-L-glycero-beta-D-manno-heptose from D-glycero-beta-D-manno-heptose 7-phosphate: step 3/4. Its pathway is bacterial outer membrane biogenesis; LPS core biosynthesis. In terms of biological role, catalyzes the phosphorylation of D-glycero-D-manno-heptose 7-phosphate at the C-1 position to selectively form D-glycero-beta-D-manno-heptose-1,7-bisphosphate. Functionally, catalyzes the ADP transfer from ATP to D-glycero-beta-D-manno-heptose 1-phosphate, yielding ADP-D-glycero-beta-D-manno-heptose. In Vibrio vulnificus (strain YJ016), this protein is Bifunctional protein HldE.